Reading from the N-terminus, the 501-residue chain is Glycerol kinase (501 aa).

Thr-14 contributes to the ADP binding site. Positions 14, 15, and 16 each coordinate ATP. Thr-14 provides a ligand contact to sn-glycerol 3-phosphate. Arg-18 serves as a coordination point for ADP. Sn-glycerol 3-phosphate is bound by residues Arg-84, Glu-85, Tyr-136, and Asp-246. Residues Arg-84, Glu-85, Tyr-136, Asp-246, and Gln-247 each coordinate glycerol. ADP-binding residues include Thr-268 and Gly-311. 4 residues coordinate ATP: Thr-268, Gly-311, Gln-315, and Gly-412. Positions 412 and 416 each coordinate ADP.

This sequence belongs to the FGGY kinase family. As to quaternary structure, homotetramer and homodimer (in equilibrium).

The enzyme catalyses glycerol + ATP = sn-glycerol 3-phosphate + ADP + H(+). It participates in polyol metabolism; glycerol degradation via glycerol kinase pathway; sn-glycerol 3-phosphate from glycerol: step 1/1. Activated by phosphorylation and inhibited by fructose 1,6-bisphosphate (FBP). Its function is as follows. Key enzyme in the regulation of glycerol uptake and metabolism. Catalyzes the phosphorylation of glycerol to yield sn-glycerol 3-phosphate. The polypeptide is Glycerol kinase (Desulforamulus reducens (strain ATCC BAA-1160 / DSM 100696 / MI-1) (Desulfotomaculum reducens)).